We begin with the raw amino-acid sequence, 563 residues long: Arginine--tRNA ligase (563 aa).

The short motif at 137–147 is the 'HIGH' region element; sequence ANPTGLLHMGN.

The protein belongs to the class-I aminoacyl-tRNA synthetase family. Monomer.

It is found in the cytoplasm. The enzyme catalyses tRNA(Arg) + L-arginine + ATP = L-arginyl-tRNA(Arg) + AMP + diphosphate. In Desulforudis audaxviator (strain MP104C), this protein is Arginine--tRNA ligase.